The sequence spans 276 residues: Chlorophyll a-b binding protein CP29.3, chloroplastic (276 aa).

A chloroplast-targeting transit peptide spans 1–29 (MATTTAAAASGIFGIRIQDPRPGTGRVQA). The segment at 1 to 53 (MATTTAAAASGIFGIRIQDPRPGTGRVQARFGFSFGKKKPAPPPKKSRQVQDD) is disordered. The span at 36 to 48 (GKKKPAPPPKKSR) shows a compositional bias: basic residues. Trp59 contacts chlorophyll b. The chlorophyll a site is built by Phe79, Glu141, and His144. A helical membrane pass occupies residues 147–167 (WAMLGTLGAIAVEALTGIAWQ). Leu181 provides a ligand contact to chlorophyll a. The helical transmembrane segment at 185–205 (LPFSLTTLIWIEVLVVGYIEF) threads the bilayer. Residues Glu204 and Arg207 each coordinate chlorophyll b. Positions 242, 245, 247, and 259 each coordinate chlorophyll a. The chain crosses the membrane as a helical span at residues 248-268 (LAMVAFLIFALQAAFTGKGPV).

Belongs to the light-harvesting chlorophyll a/b-binding (LHC) protein family. In terms of assembly, the LHC complex consists of chlorophyll a-b binding proteins. Requires Binds at least 14 chlorophylls (8 Chl-a and 6 Chl-b) and carotenoids such as lutein and neoxanthin. as cofactor. Post-translationally, photoregulated by reversible phosphorylation of its threonine residues.

The protein resides in the plastid. The protein localises to the chloroplast thylakoid membrane. Its function is as follows. The light-harvesting complex (LHC) functions as a light receptor, it captures and delivers excitation energy to photosystems with which it is closely associated. In Arabidopsis thaliana (Mouse-ear cress), this protein is Chlorophyll a-b binding protein CP29.3, chloroplastic (LHCB4.3).